Here is a 260-residue protein sequence, read N- to C-terminus: tRNA (guanine-N(1)-)-methyltransferase (260 aa).

S-adenosyl-L-methionine-binding positions include Gly117 and 137 to 142 (LGDFVL).

This sequence belongs to the RNA methyltransferase TrmD family. As to quaternary structure, homodimer.

The protein resides in the cytoplasm. The catalysed reaction is guanosine(37) in tRNA + S-adenosyl-L-methionine = N(1)-methylguanosine(37) in tRNA + S-adenosyl-L-homocysteine + H(+). Its function is as follows. Specifically methylates guanosine-37 in various tRNAs. The sequence is that of tRNA (guanine-N(1)-)-methyltransferase from Cupriavidus taiwanensis (strain DSM 17343 / BCRC 17206 / CCUG 44338 / CIP 107171 / LMG 19424 / R1) (Ralstonia taiwanensis (strain LMG 19424)).